We begin with the raw amino-acid sequence, 156 residues long: Small ribosomal subunit protein uS7 (156 aa).

It belongs to the universal ribosomal protein uS7 family. As to quaternary structure, part of the 30S ribosomal subunit. Contacts proteins S9 and S11.

One of the primary rRNA binding proteins, it binds directly to 16S rRNA where it nucleates assembly of the head domain of the 30S subunit. Is located at the subunit interface close to the decoding center, probably blocks exit of the E-site tRNA. This chain is Small ribosomal subunit protein uS7, found in Campylobacter jejuni subsp. jejuni serotype O:6 (strain 81116 / NCTC 11828).